Here is a 474-residue protein sequence, read N- to C-terminus: 3-isopropylmalate dehydratase large subunit (474 aa).

Residues Cys355, Cys415, and Cys418 each contribute to the [4Fe-4S] cluster site.

The protein belongs to the aconitase/IPM isomerase family. LeuC type 1 subfamily. Heterodimer of LeuC and LeuD. It depends on [4Fe-4S] cluster as a cofactor.

It catalyses the reaction (2R,3S)-3-isopropylmalate = (2S)-2-isopropylmalate. Its pathway is amino-acid biosynthesis; L-leucine biosynthesis; L-leucine from 3-methyl-2-oxobutanoate: step 2/4. Its function is as follows. Catalyzes the isomerization between 2-isopropylmalate and 3-isopropylmalate, via the formation of 2-isopropylmaleate. This is 3-isopropylmalate dehydratase large subunit from Shewanella sp. (strain MR-4).